The primary structure comprises 251 residues: MTARTGWPPRMVMRKAGGLRTLEAALIRGGLGPVAGVDEAGRGPCAGPLVVAACLLAPKAYDRLAGLDDSKKLTEAAREELYPVITRLALAWEVVVIPAWEIDAIGIHVANIEGMRRAVAGLRQRPGYVLTDGFRVPGLAAPSLPVIGGDAAAACIAAASILAKVTRDRIMVELDSRHPGYGFAAHKGYNTPEHTAALQRLGPCSEHRRSWRNVRERLGLRPLDPTVEYAETVLADGVADSRVAADAAHAG.

Positions 32–223 constitute an RNase H type-2 domain; it reads GPVAGVDEAG…VRERLGLRPL (192 aa). Aspartate 38, glutamate 39, and aspartate 132 together coordinate a divalent metal cation.

The protein belongs to the RNase HII family. The cofactor is Mn(2+). It depends on Mg(2+) as a cofactor.

It is found in the cytoplasm. The catalysed reaction is Endonucleolytic cleavage to 5'-phosphomonoester.. Endonuclease that specifically degrades the RNA of RNA-DNA hybrids. The protein is Ribonuclease HII of Nocardia farcinica (strain IFM 10152).